The following is a 254-amino-acid chain: 3-deoxy-manno-octulosonate cytidylyltransferase (254 aa).

The protein belongs to the KdsB family.

It localises to the cytoplasm. It catalyses the reaction 3-deoxy-alpha-D-manno-oct-2-ulosonate + CTP = CMP-3-deoxy-beta-D-manno-octulosonate + diphosphate. It participates in nucleotide-sugar biosynthesis; CMP-3-deoxy-D-manno-octulosonate biosynthesis; CMP-3-deoxy-D-manno-octulosonate from 3-deoxy-D-manno-octulosonate and CTP: step 1/1. It functions in the pathway bacterial outer membrane biogenesis; lipopolysaccharide biosynthesis. Activates KDO (a required 8-carbon sugar) for incorporation into bacterial lipopolysaccharide in Gram-negative bacteria. This is 3-deoxy-manno-octulosonate cytidylyltransferase from Ectopseudomonas mendocina (strain ymp) (Pseudomonas mendocina).